Here is a 612-residue protein sequence, read N- to C-terminus: uncharacterized protein (612 aa).

Disordered regions lie at residues 46 to 113 (QQPQ…MVTP), 129 to 185 (QQYQ…TPTY), 313 to 360 (TKDG…GSTM), 457 to 488 (FSIS…SGYG), and 593 to 612 (NNTN…VVTI). A compositionally biased stretch (low complexity) spans 58–102 (HQQIPISTQSTPNSTSSTTTTTTTTTSTTTAPTSNSKKSKTTPSN). Composition is skewed to polar residues over residues 103–113 (GNKPTSGMVTP) and 129–138 (QQYQPNSQLQ). The segment covering 143–169 (IIKKSSLSTTPNNINNNNNNNNNTNTI) has biased composition (low complexity). Residues 175 to 185 (GGNNSAPTPTY) are compositionally biased toward polar residues. Positions 323–359 (TTSSTSTSSSATSTTSSSTSSTTTTSSTSNSSTPGST) are enriched in low complexity.

This is an uncharacterized protein from Dictyostelium discoideum (Social amoeba).